Reading from the N-terminus, the 295-residue chain is Acetyl-coenzyme A carboxylase carboxyl transferase subunit beta (295 aa).

A disordered region spans residues 1-20 (MSWLSKLMPSGIRTENTPAK). One can recognise a CoA carboxyltransferase N-terminal domain in the interval 28–295 (LWEKCSNCGS…QPHPQDADAA (268 aa)). Residues cysteine 32, cysteine 35, cysteine 51, and cysteine 54 each contribute to the Zn(2+) site. A C4-type zinc finger spans residues 32-54 (CSNCGSALYGPELEENLEVCPKC).

The protein belongs to the AccD/PCCB family. As to quaternary structure, acetyl-CoA carboxylase is a heterohexamer composed of biotin carboxyl carrier protein (AccB), biotin carboxylase (AccC) and two subunits each of ACCase subunit alpha (AccA) and ACCase subunit beta (AccD). It depends on Zn(2+) as a cofactor.

It localises to the cytoplasm. It catalyses the reaction N(6)-carboxybiotinyl-L-lysyl-[protein] + acetyl-CoA = N(6)-biotinyl-L-lysyl-[protein] + malonyl-CoA. It participates in lipid metabolism; malonyl-CoA biosynthesis; malonyl-CoA from acetyl-CoA: step 1/1. In terms of biological role, component of the acetyl coenzyme A carboxylase (ACC) complex. Biotin carboxylase (BC) catalyzes the carboxylation of biotin on its carrier protein (BCCP) and then the CO(2) group is transferred by the transcarboxylase to acetyl-CoA to form malonyl-CoA. This is Acetyl-coenzyme A carboxylase carboxyl transferase subunit beta from Xanthomonas campestris pv. campestris (strain B100).